The primary structure comprises 92 residues: Small ribosomal subunit protein bS18 (92 aa).

The disordered stretch occupies residues 1–28 (MTQQGNSGERKPRGKGPKRPRKPKVDPF). The span at 12-22 (PRGKGPKRPRK) shows a compositional bias: basic residues.

It belongs to the bacterial ribosomal protein bS18 family. As to quaternary structure, part of the 30S ribosomal subunit. Forms a tight heterodimer with protein bS6.

Its function is as follows. Binds as a heterodimer with protein bS6 to the central domain of the 16S rRNA, where it helps stabilize the platform of the 30S subunit. The polypeptide is Small ribosomal subunit protein bS18 (Deinococcus radiodurans (strain ATCC 13939 / DSM 20539 / JCM 16871 / CCUG 27074 / LMG 4051 / NBRC 15346 / NCIMB 9279 / VKM B-1422 / R1)).